Reading from the N-terminus, the 978-residue chain is Chaperone protein ClpB2, chloroplastic (978 aa).

Residues 1 to 76 (MAAAPPLAAG…RMPPRTLSVR (76 aa)) constitute a chloroplast transit peptide. The Clp R domain occupies 85-229 (TQQEFTEMAW…KTAIESIRGK (145 aa)). Repeat stretches follow at residues 89 to 154 (FTEM…IQRQ) and 166 to 229 (LGRD…IRGK). The interval 244–492 (LDKYGKDLTA…KLKMEITSKP (249 aa)) is i. Residues 289 to 296 (GEPGVGKT) and 692 to 699 (GPTGVGKT) contribute to the ATP site. Positions 618–809 (VTQDDIAEIV…IIIMTSNVGS (192 aa)) are II.

The protein belongs to the ClpA/ClpB family.

It is found in the plastid. The protein localises to the chloroplast. Molecular chaperone that may play a role in chloroplast development. The protein is Chaperone protein ClpB2, chloroplastic (CLPB2) of Oryza sativa subsp. japonica (Rice).